The sequence spans 1715 residues: Ubiquitin carboxyl-terminal hydrolase 32 (1715 aa).

2 EF-hand domains span residues Ile-161 to Gly-196 and Pro-197 to Val-232. Ca(2+) contacts are provided by Asp-174, Asn-176, Asp-178, His-180, Glu-185, Asp-210, Asp-212, Asp-214, and Glu-221. The DUSP domain maps to Gln-314 to Ile-492. A disordered region spans residues Gln-393–Pro-429. Over residues Gly-408 to Gly-419 the composition is skewed to low complexity. The 999-residue stretch at Thr-677–Lys-1675 folds into the USP domain. The active-site Nucleophile is Cys-686. Polar residues-rich tracts occupy residues Thr-1103 to Thr-1126 and Tyr-1150 to His-1164. Disordered stretches follow at residues Thr-1103–Ala-1213 and Asp-1536–Leu-1569. Acidic residues predominate over residues Asp-1171–Asn-1180. The segment covering Asp-1188 to Pro-1209 has biased composition (polar residues). The span at Ala-1540–Leu-1549 shows a compositional bias: basic and acidic residues. Positions Pro-1550 to Thr-1559 are enriched in polar residues. His-1633 (proton acceptor) is an active-site residue.

It belongs to the peptidase C19 family. USP20/USP33 subfamily.

It carries out the reaction Thiol-dependent hydrolysis of ester, thioester, amide, peptide and isopeptide bonds formed by the C-terminal Gly of ubiquitin (a 76-residue protein attached to proteins as an intracellular targeting signal).. Deubiquitinating enzyme that acts as an inhibitor of mitophagy probably by counteracting the action of park. Possibly functions by hydrolyzing ubiquitin attached by park on target proteins, thereby reducing park's ability to drive mitophagy. This is Ubiquitin carboxyl-terminal hydrolase 32 from Drosophila melanogaster (Fruit fly).